Reading from the N-terminus, the 63-residue chain is Large ribosomal subunit protein uL29 (63 aa).

It belongs to the universal ribosomal protein uL29 family.

The polypeptide is Large ribosomal subunit protein uL29 (Tolumonas auensis (strain DSM 9187 / NBRC 110442 / TA 4)).